We begin with the raw amino-acid sequence, 359 residues long: Fructose-bisphosphate aldolase (359 aa).

S50 provides a ligand contact to D-glyceraldehyde 3-phosphate. The active-site Proton donor is D83. Zn(2+)-binding residues include H84, D105, E142, and H198. G199 is a dihydroxyacetone phosphate binding site. Zn(2+) is bound at residue H232. Residues 233-235 and 275-278 each bind dihydroxyacetone phosphate; these read GSS and NIDT.

Zn(2+) serves as cofactor.

The catalysed reaction is beta-D-fructose 1,6-bisphosphate = D-glyceraldehyde 3-phosphate + dihydroxyacetone phosphate. The protein operates within carbohydrate degradation; glycolysis; D-glyceraldehyde 3-phosphate and glycerone phosphate from D-glucose: step 4/4. Functionally, catalyzes the aldol condensation of dihydroxyacetone phosphate (DHAP or glycerone-phosphate) with glyceraldehyde 3-phosphate (G3P) to form fructose 1,6-bisphosphate (FBP) in gluconeogenesis and the reverse reaction in glycolysis. The protein is Fructose-bisphosphate aldolase of Nostoc sp. (strain PCC 7120 / SAG 25.82 / UTEX 2576).